A 188-amino-acid polypeptide reads, in one-letter code: PRA1 family protein 3 (188 aa).

The residue at position 1 (Met-1) is an N-acetylmethionine. At 1 to 35 (MEVQVAPLRSWEDFFPGSDRFGRPDFKDISKWNNR) the chain is on the cytoplasmic side. The next 2 helical transmembrane spans lie at 36–56 (VVNNLLYYQTNYLMVAAAVVA) and 57–77 (IVGFLSPLNMLIGGTVVILVF). The Cytoplasmic portion of the chain corresponds to 78–93 (LGFVWVSHNKDILRRM). The next 2 helical transmembrane spans lie at 94-114 (KKQYPTTFVIVIMLSSYFLIS) and 115-135 (YLGDVMVFMFGITLPLLLMFI). The Cytoplasmic segment spans residues 136 to 188 (HASLRLRNIKNKLENKKEEIGLKKTPMGIILDALEQQEDNINKLASYIPKVKE). The targeting to endoplasmic reticulum membrane stretch occupies residues 136-188 (HASLRLRNIKNKLENKKEEIGLKKTPMGIILDALEQQEDNINKLASYIPKVKE).

The protein belongs to the PRA1 family. Binds to prenylated RAB and Ras superfamily members.

It is found in the endoplasmic reticulum membrane. It localises to the cell membrane. Its subcellular location is the cytoplasm. The protein resides in the cytoskeleton. Regulates intracellular concentrations of taurine and glutamate. Negatively modulates SLC1A1/EAAC1 glutamate transport activity by decreasing its affinity for glutamate in a PKC activity-dependent manner. May be involved in membrane traffic. In Gallus gallus (Chicken), this protein is PRA1 family protein 3 (ARL6IP5).